A 286-amino-acid chain; its full sequence is 4-hydroxybenzoate octaprenyltransferase (286 aa).

Helical transmembrane passes span 21–40 (GTLLLLWPCLMALMLAAGGM), 95–115 (ILFVILGLSAFGLVLLLNGLV), 142–162 (FLGIVWSWSIPMAYAAQTGEV), 167–187 (WWLFAANWCWTVAYDTMYAMV), 210–230 (QIIGLFQLAALACFIAAGWSA), 235–255 (LYGLGILTFVGFSTYQQMLIF), and 266–286 (FLNNNWAGLALFVGLGADYLI).

Belongs to the UbiA prenyltransferase family. Mg(2+) serves as cofactor.

The protein resides in the cell inner membrane. It carries out the reaction all-trans-octaprenyl diphosphate + 4-hydroxybenzoate = 4-hydroxy-3-(all-trans-octaprenyl)benzoate + diphosphate. Its pathway is cofactor biosynthesis; ubiquinone biosynthesis. In terms of biological role, catalyzes the prenylation of para-hydroxybenzoate (PHB) with an all-trans polyprenyl group. Mediates the second step in the final reaction sequence of ubiquinone-8 (UQ-8) biosynthesis, which is the condensation of the polyisoprenoid side chain with PHB, generating the first membrane-bound Q intermediate 3-octaprenyl-4-hydroxybenzoate. This is 4-hydroxybenzoate octaprenyltransferase from Shewanella baltica (strain OS185).